Here is a 435-residue protein sequence, read N- to C-terminus: tRNA modification GTPase MnmE (435 aa).

Positions 20, 77, and 117 each coordinate (6S)-5-formyl-5,6,7,8-tetrahydrofolate. The region spanning 214–359 (GFKIVIVGAP…FMKELESFCL (146 aa)) is the TrmE-type G domain. GTP contacts are provided by residues 224 to 229 (NSGKSS), 243 to 249 (TEEAGTT), and 268 to 271 (DTAG). Residues serine 228 and threonine 249 each coordinate Mg(2+). Lysine 435 contacts (6S)-5-formyl-5,6,7,8-tetrahydrofolate.

It belongs to the TRAFAC class TrmE-Era-EngA-EngB-Septin-like GTPase superfamily. TrmE GTPase family. In terms of assembly, homodimer. Heterotetramer of two MnmE and two MnmG subunits. K(+) is required as a cofactor.

The protein resides in the cytoplasm. Functionally, exhibits a very high intrinsic GTPase hydrolysis rate. Involved in the addition of a carboxymethylaminomethyl (cmnm) group at the wobble position (U34) of certain tRNAs, forming tRNA-cmnm(5)s(2)U34. The chain is tRNA modification GTPase MnmE from Bartonella henselae (strain ATCC 49882 / DSM 28221 / CCUG 30454 / Houston 1) (Rochalimaea henselae).